Here is a 287-residue protein sequence, read N- to C-terminus: Probable ketose 3-epimerase (287 aa).

The active-site Proton donor/acceptor is Glu-152. Glu-152 and Asp-185 together coordinate Mn(2+). Substrate is bound at residue His-188. His-211 contributes to the Mn(2+) binding site. Residue Arg-217 coordinates substrate. Catalysis depends on Glu-246, which acts as the Proton donor/acceptor. A Mn(2+)-binding site is contributed by Glu-246.

Belongs to the hyi family. Mn(2+) is required as a cofactor.

In terms of biological role, probably catalyzes the epimerization of ketopentoses and/or ketohexoses at the C3 position. The chain is Probable ketose 3-epimerase from Synechocystis sp. (strain ATCC 27184 / PCC 6803 / Kazusa).